Here is a 125-residue protein sequence, read N- to C-terminus: Small ribosomal subunit protein uS13 (125 aa).

The tract at residues 91–125 (HRRSLPVRGQNTQTNARTRKGKRKTVAGKKKAARK) is disordered. Over residues 107–125 (RTRKGKRKTVAGKKKAARK) the composition is skewed to basic residues.

It belongs to the universal ribosomal protein uS13 family. In terms of assembly, part of the 30S ribosomal subunit. Forms a loose heterodimer with protein S19. Forms two bridges to the 50S subunit in the 70S ribosome.

Functionally, located at the top of the head of the 30S subunit, it contacts several helices of the 16S rRNA. In the 70S ribosome it contacts the 23S rRNA (bridge B1a) and protein L5 of the 50S subunit (bridge B1b), connecting the 2 subunits; these bridges are implicated in subunit movement. Contacts the tRNAs in the A and P-sites. This is Small ribosomal subunit protein uS13 from Chlorobium phaeovibrioides (strain DSM 265 / 1930) (Prosthecochloris vibrioformis (strain DSM 265)).